Here is a 292-residue protein sequence, read N- to C-terminus: Ribosomal protein L11 methyltransferase (292 aa).

Positions 143, 164, 186, and 228 each coordinate S-adenosyl-L-methionine.

This sequence belongs to the methyltransferase superfamily. PrmA family.

It localises to the cytoplasm. The enzyme catalyses L-lysyl-[protein] + 3 S-adenosyl-L-methionine = N(6),N(6),N(6)-trimethyl-L-lysyl-[protein] + 3 S-adenosyl-L-homocysteine + 3 H(+). Methylates ribosomal protein L11. The sequence is that of Ribosomal protein L11 methyltransferase from Aeromonas salmonicida (strain A449).